The chain runs to 4466 residues: Dynein beta chain, ciliary (4466 aa).

Residues 1–1813 (MGDVVDARLD…YANICDAQFK (1813 aa)) form a stem region. 154–161 (AGQVKGKT) provides a ligand contact to ATP. 6 coiled-coil regions span residues 482 to 502 (QEFL…DRRL), 627 to 643 (QKYE…EQKV), 734 to 805 (VLEV…WTKQ), 1036 to 1056 (TLDQ…EADE), 1306 to 1337 (WLEI…AWDA), and 1443 to 1468 (LLKS…MTSK). 4 AAA regions span residues 1814–2035 (YSYE…VLVV), 2095–2316 (KVVK…IRFK), 2422–2669 (ELDP…VFQG), and 2767–3016 (TYNE…ERRY). ATP contacts are provided by residues 1852-1859 (GPAGTGKT), 2133-2140 (GNAGTGKS), 2460-2467 (GNAGLGKS), and 2805-2812 (GVGGSGKQ). Coiled-coil stretches lie at residues 3033–3134 (SLLA…AKAE), 3263–3325 (EPKR…SRTI), and 3573–3642 (QERP…EEAK). The interval 3033–3325 (SLLAMKSKEL…QEAEATSRTI (293 aa)) is stalk. 2 AAA regions span residues 3409 to 3636 (LTDD…EISV) and 3846 to 4072 (VRNF…VLYN).

The protein belongs to the dynein heavy chain family. As to quaternary structure, consists of at least two heavy chains (alpha and beta), three intermediate chains and several light chains.

The protein resides in the cell projection. The protein localises to the cilium. It is found in the flagellum. It localises to the cytoplasm. Its subcellular location is the cytoskeleton. The protein resides in the flagellum axoneme. Force generating protein of eukaryotic cilia and flagella. Produces force towards the minus ends of microtubules. Dynein has ATPase activity; the force-producing power stroke is thought to occur on release of ADP. This Heliocidaris crassispina (Sea urchin) protein is Dynein beta chain, ciliary.